Reading from the N-terminus, the 293-residue chain is Protein bcp-1 (293 aa).

Positions 1 to 12 are enriched in basic and acidic residues; that stretch reads MGKKRSREEAQK. Positions 1-35 are disordered; the sequence is MGKKRSREEAQKEVVQNDPTVDKMDEDSDSSDSDE. The span at 24–35 shows a compositional bias: acidic residues; sequence MDEDSDSSDSDE.

Belongs to the BCP1 family.

Its subcellular location is the cytoplasm. The protein localises to the nucleus. Functionally, involved in nuclear export, actin cytoskeleton organization and vesicular transport. This chain is Protein bcp-1 (bcp-1), found in Neurospora crassa (strain ATCC 24698 / 74-OR23-1A / CBS 708.71 / DSM 1257 / FGSC 987).